The following is a 103-amino-acid chain: Co-chaperonin GroES (103 aa).

Belongs to the GroES chaperonin family. Heptamer of 7 subunits arranged in a ring. Interacts with the chaperonin GroEL.

The protein resides in the cytoplasm. In terms of biological role, together with the chaperonin GroEL, plays an essential role in assisting protein folding. The GroEL-GroES system forms a nano-cage that allows encapsulation of the non-native substrate proteins and provides a physical environment optimized to promote and accelerate protein folding. GroES binds to the apical surface of the GroEL ring, thereby capping the opening of the GroEL channel. This chain is Co-chaperonin GroES, found in Prochlorococcus marinus (strain MIT 9313).